The sequence spans 181 residues: MKQKKVFVVWLTGVSGAGKSTLANLLKQQLDARGLRTYLLDGDTLRNGLNQDLGFSDADRRENIRRTAEVARLMMDAGFIVIAALISPFRDARSRARARFAPGTFIEVFVDVALEVAEARDPKGLYVLARQGAIPQFTGIGSAYENPLSPEVHVRTAETSPSECIATIMQKLPLDTDVGAP.

13–20 (GVSGAGKS) is a binding site for ATP. The Phosphoserine intermediate role is filled by S87.

Belongs to the APS kinase family.

The enzyme catalyses adenosine 5'-phosphosulfate + ATP = 3'-phosphoadenylyl sulfate + ADP + H(+). The protein operates within sulfur metabolism; hydrogen sulfide biosynthesis; sulfite from sulfate: step 2/3. Its function is as follows. Catalyzes the synthesis of activated sulfate. The sequence is that of Adenylyl-sulfate kinase from Burkholderia ambifaria (strain ATCC BAA-244 / DSM 16087 / CCUG 44356 / LMG 19182 / AMMD) (Burkholderia cepacia (strain AMMD)).